Reading from the N-terminus, the 317-residue chain is Peroxidase 22.3 (317 aa).

A signal peptide spans 1–25 (MASATNSSLSLMLLVAAAMASVASA). Pyrrolidone carboxylic acid is present on Gln-26. 2 cysteine pairs are disulfide-bonded: Cys-36–Cys-111 and Cys-69–Cys-74. Residue His-67 is the Proton acceptor of the active site. Residues Asp-68, Val-71, Gly-73, Asp-75, and Ser-77 each coordinate Ca(2+). An N-linked (GlcNAc...) asparagine glycan is attached at Asn-112. Intrachain disulfides connect Cys-117–Cys-312 and Cys-196–Cys-221. Pro-159 provides a ligand contact to substrate. N-linked (GlcNAc...) asparagine glycosylation occurs at Asn-171. A heme b-binding site is contributed by His-189. Thr-190 provides a ligand contact to Ca(2+). Residue Asn-205 is glycosylated (N-linked (GlcNAc...) asparagine). Residues Asp-236, Thr-239, and Asp-244 each coordinate Ca(2+).

It belongs to the peroxidase family. Classical plant (class III) peroxidase subfamily. It depends on heme b as a cofactor. Ca(2+) serves as cofactor.

It is found in the secreted. It carries out the reaction H2O2 + AH2 = A + 2 H2O. Functionally, removal of H(2)O(2), oxidation of toxic reductants, biosynthesis and degradation of lignin, suberization, auxin catabolism, response to environmental stresses such as wounding, pathogen attack and oxidative stress. These functions might be dependent on each isozyme/isoform in each plant tissue. This is Peroxidase 22.3 from Oryza sativa subsp. japonica (Rice).